A 101-amino-acid chain; its full sequence is Small ribosomal subunit protein bS16 (101 aa).

This sequence belongs to the bacterial ribosomal protein bS16 family.

This chain is Small ribosomal subunit protein bS16, found in Ureaplasma parvum serovar 3 (strain ATCC 700970).